A 287-amino-acid chain; its full sequence is uncharacterized protein (287 aa).

The span at Met-1–Asn-17 shows a compositional bias: basic and acidic residues. The tract at residues Met-1–Phe-29 is disordered. A helical membrane pass occupies residues Leu-38–Gly-60.

It is found in the membrane. This is an uncharacterized protein from Escherichia coli O6:H1 (strain CFT073 / ATCC 700928 / UPEC).